The sequence spans 144 residues: Large ribosomal subunit protein uL13 (144 aa).

This sequence belongs to the universal ribosomal protein uL13 family. As to quaternary structure, part of the 50S ribosomal subunit.

Functionally, this protein is one of the early assembly proteins of the 50S ribosomal subunit, although it is not seen to bind rRNA by itself. It is important during the early stages of 50S assembly. The protein is Large ribosomal subunit protein uL13 of Legionella pneumophila (strain Paris).